The following is a 276-amino-acid chain: Putative aliphatic sulfonates transport permease protein SsuC (276 aa).

The next 7 membrane-spanning stretches (helical) occupy residues 32-52 (GLLL…LGVV), 54-74 (ATVL…ILSG), 87-107 (AALG…LAGF), 119-141 (LQML…FGFD), 146-168 (ILLI…IRGV), 199-219 (ILLG…VAEL), and 242-262 (VFAG…FVRL). One can recognise an ABC transmembrane type-1 domain in the interval 80 to 260 (LQISIYRAAL…VVGKLTDSFV (181 aa)).

It belongs to the binding-protein-dependent transport system permease family. CysTW subfamily.

Its subcellular location is the cell membrane. Part of a binding-protein-dependent transport system for aliphatic sulfonates. Probably responsible for the translocation of the substrate across the membrane. In Bacillus subtilis (strain 168), this protein is Putative aliphatic sulfonates transport permease protein SsuC (ssuC).